The primary structure comprises 207 residues: Fibroblast growth factor 18 (207 aa).

The signal sequence occupies residues 1-27; sequence MYSAPSACTCLCLHFLLLCFQVQVLAA. A glycan (N-linked (GlcNAc...) asparagine) is linked at Asn39. A disulfide bond links Cys109 and Cys127. Residue Asn137 is glycosylated (N-linked (GlcNAc...) asparagine).

It belongs to the heparin-binding growth factors family. As to quaternary structure, interacts with FGFR3 and FGFR4.

The protein localises to the secreted. Functionally, plays an important role in the regulation of cell proliferation, cell differentiation and cell migration. Required for normal ossification and bone development. Stimulates hepatic and intestinal proliferation. This chain is Fibroblast growth factor 18 (Fgf18), found in Mus musculus (Mouse).